A 317-amino-acid polypeptide reads, in one-letter code: MPVQGSQRRLLGSLNSTPTATPHLGLAANQTGARCLEVSVPDGLFLSLGLVSLVENVLVVTAIAKNRNLHSPMYCFICCLALSDLLVSGSNMLETAVTLLLEAGALAARAAVVQQLDNVIDVITCSSMLSSLCFLGAIAVDRYISIFYALRYHSIVTLPRARRAVAAIWVASVLCSTLFIAYYDHAAVLLCLVVFFLAMLVLMAVLYVHMLARACQHAQGIARLHKRQRLAHQGFGLKGAATLTILLGIFFLCWGPFFLHLTLIVLCPQHPTCSCIFKNFNLFLALIICNAIIDPLIYAFRSQELRRTLKEVLLCSW.

Residues Met1–Glu37 are Extracellular-facing. An N-linked (GlcNAc...) asparagine glycan is attached at Asn29. The helical transmembrane segment at Val38–Ile63 threads the bilayer. The Cytoplasmic segment spans residues Ala64–Pro72. A helical membrane pass occupies residues Met73–Leu93. Residues Glu94–Asn118 are Extracellular-facing. Residues Val119 to Val140 form a helical membrane-spanning segment. Residues Asp141 to Arg163 lie on the Cytoplasmic side of the membrane. The chain crosses the membrane as a helical span at residues Ala164 to Tyr183. At Asp184–Cys191 the chain is on the extracellular side. Residues Leu192–Leu211 form a helical membrane-spanning segment. Topologically, residues Ala212–Ala240 are cytoplasmic. The chain crosses the membrane as a helical span at residues Ala241 to Leu266. Over Cys267–Asn279 the chain is Extracellular. A helical transmembrane segment spans residues Phe280 to Phe300. The Cytoplasmic segment spans residues Arg301–Trp317. Cys315 carries the S-palmitoyl cysteine lipid modification.

The protein belongs to the G-protein coupled receptor 1 family. Interacts with MGRN1, but does not undergo MGRN1-mediated ubiquitination; this interaction competes with GNAS-binding and thus inhibits agonist-induced cAMP production. Interacts with OPN3; the interaction results in a decrease in MC1R-mediated cAMP signaling and ultimately a decrease in melanin production in melanocytes.

The protein resides in the cell membrane. In terms of biological role, receptor for MSH (alpha, beta and gamma) and ACTH. The activity of this receptor is mediated by G proteins which activate adenylate cyclase. Mediates melanogenesis, the production of eumelanin (black/brown) and phaeomelanin (red/yellow), via regulation of cAMP signaling in melanocytes. The polypeptide is Melanocyte-stimulating hormone receptor (MC1R) (Macaca sylvanus (Barbary macaque)).